A 689-amino-acid polypeptide reads, in one-letter code: MVVQLDQIHFFIFHEVLKIFKTMPQLFKTSKKIDELVINTIRFLSVDMVERAKSGHPGMPLGASHIVYLLYDRIMKYNPKNPNWFNRDRFILSAGHGSAMLYAAFYMFGFDLTLEDLKAFRQLNSKTPGHPEYGLTPGVEVTTGNLGQGFGNAVGMAMAEKFLSHYFNREGYPVIDHYTYVLVSDGDLMEGVSYEAASLAGHFKLNKLIAIWDNNHITIDGDTKLTWTEDVLKRFEALGWEVYHLEDGYNLDLLEETILKAKESDKPTFISVRTHIGYGTPLQDTPEVHGKPMGKEIVEETKKKFGWPLEEFYVPEEALNYTRRKVEEGKALEEEWNKLYAEYREKYPDLAQTLEKALNKEWSLDWLEKVEEFKEDMPTRKASGKVLNVMADYIPTMIGGSADLSESVNTVLKKYGDFEADTPTGRNVHYGVREHAMGTILNGMAYHGGILPYGGTFLIFSEYMRPAIRTAALANLQVIFVYSHDSIGLGEDGPTHQPVEQLWSLRSIPNLWVVRPADANEVKYAWEIALKRKNGPTAIILTRQKVKTIDRSKYASPEGVRKGAYVIADTEGKPDVVIIATGSEVQVALGAKEILEQKGIKTRVVNMACCELFEEQPEEYKREVLPPEVTKRVAVEAGRDTGWYKYVGSDGLVISLNEFGKSAPGSVLFEYYGFTPENVANKVIEKWFS.

H56 is a binding site for substrate. Thiamine diphosphate is bound by residues H96 and 144 to 146; that span reads GNL. D185 provides a ligand contact to Mg(2+). Thiamine diphosphate is bound by residues G186 and N215. Residues N215 and I217 each contribute to the Mg(2+) site. Positions 289, 380, and 407 each coordinate substrate. Residue H289 participates in thiamine diphosphate binding. Catalysis depends on E434, which acts as the Proton donor. F460 contacts thiamine diphosphate. Substrate contacts are provided by H484, D492, and R543.

This sequence belongs to the transketolase family. In terms of assembly, homodimer. Mg(2+) serves as cofactor. It depends on Ca(2+) as a cofactor. Requires Mn(2+) as cofactor. Co(2+) is required as a cofactor. The cofactor is thiamine diphosphate.

The catalysed reaction is D-sedoheptulose 7-phosphate + D-glyceraldehyde 3-phosphate = aldehydo-D-ribose 5-phosphate + D-xylulose 5-phosphate. Its function is as follows. Catalyzes the transfer of a two-carbon ketol group from a ketose donor to an aldose acceptor, via a covalent intermediate with the cofactor thiamine pyrophosphate. This is Transketolase (tkt) from Aquifex aeolicus (strain VF5).